We begin with the raw amino-acid sequence, 180 residues long: MKEKAVVLDDQMIRRALTRISHEIVEHNKGVDQCVLVGIKTRGIFLAKRLAEKIGQIEGKEIEVGELDITLYRDDLTLQSKDKEPLVKGSDIPVDITKKKVILVDDVLYTGRTVRAAMDALMDLGRPSQIQLAVLVDRGHRELPIRADYVGKNIPTSSEERIEVDLQETDQKDRVSIYEK.

Positions 101–113 match the PRPP-binding motif; the sequence is VILVDDVLYTGRT.

This sequence belongs to the purine/pyrimidine phosphoribosyltransferase family. PyrR subfamily. In terms of assembly, homodimer and homohexamer; in equilibrium.

The enzyme catalyses UMP + diphosphate = 5-phospho-alpha-D-ribose 1-diphosphate + uracil. In terms of biological role, regulates transcriptional attenuation of the pyrimidine nucleotide (pyr) operon by binding in a uridine-dependent manner to specific sites on pyr mRNA. This disrupts an antiterminator hairpin in the RNA and favors formation of a downstream transcription terminator, leading to a reduced expression of downstream genes. Its function is as follows. Also displays a weak uracil phosphoribosyltransferase activity which is not physiologically significant. The polypeptide is Bifunctional protein PyrR (Bacillus cytotoxicus (strain DSM 22905 / CIP 110041 / 391-98 / NVH 391-98)).